A 105-amino-acid chain; its full sequence is Large ribosomal subunit protein uL24 (105 aa).

The protein belongs to the universal ribosomal protein uL24 family. As to quaternary structure, part of the 50S ribosomal subunit.

In terms of biological role, one of two assembly initiator proteins, it binds directly to the 5'-end of the 23S rRNA, where it nucleates assembly of the 50S subunit. Its function is as follows. One of the proteins that surrounds the polypeptide exit tunnel on the outside of the subunit. This is Large ribosomal subunit protein uL24 from Wolbachia pipientis wMel.